We begin with the raw amino-acid sequence, 745 residues long: Aminopeptidase NAALADL1 (745 aa).

Over M1–I6 the chain is Cytoplasmic. The chain crosses the membrane as a helical; Signal-anchor for type II membrane protein span at residues L7–I28. Over P29–L745 the chain is Extracellular. N-linked (GlcNAc...) asparagine glycans are attached at residues N128, N141, and N235. T263 and L266 together coordinate Ca(2+). Residues N279, N302, and N329 are each glycosylated (N-linked (GlcNAc...) asparagine). The cysteines at positions 301 and 318 are disulfide-linked. Zn(2+) is bound by residues H373 and D383. E421 serves as the catalytic Proton donor/acceptor. A Zn(2+)-binding site is contributed by E422. Ca(2+)-binding residues include E430 and E433. D450 is a Zn(2+) binding site. 2 N-linked (GlcNAc...) asparagine glycosylation sites follow: N456 and N497. A Zn(2+)-binding site is contributed by H550. Residues N593 and N620 are each glycosylated (N-linked (GlcNAc...) asparagine).

It belongs to the peptidase M28 family. M28B subfamily. As to quaternary structure, homodimer. Zn(2+) is required as a cofactor. N-glycosylated.

Its subcellular location is the apical cell membrane. Functionally, aminopeptidase with broad substrate specificity. Has lower activity with substrates that have Asp or Glu in the P2' position, or Pro in the P3' position. Lacks activity with substrates that have both Pro in the P3' position and Asp or Glu in the P2' position. Lacks carboxypeptidase activity. Lacks dipeptidyl-peptidase IV type activity. This is Aminopeptidase NAALADL1 (Naaladl1) from Mus musculus (Mouse).